Consider the following 526-residue polypeptide: MTSPVPSEPVSEDTHDSSSGSEVEPSKTSTRAPKRRRLSESSDDSDDSYVAPAPLPTLSRIKKKGAPDAKPAAPAGQDNPVLIRDALEIGLREEASSFAALNVAPWLVGSLTTMAVRKPTAIQKACIPEILKGRDCIGGSRTGSGKTIAFSVPMLQKWAEDPFGIFGVVLTPTRELALQIFEQIKAISAPQSMKPVLITGGTDMRPQAIALAGRPHVVIATPGRLADHIKSSGEDTVCGLKRVRMVVLDEADRLLASGPGSMLPDVETCLSALPPSSERQTLLFTATVTPEVRALKNMPRSANKPPVFVTEISTENQGTIPPTLKQTYLKVPLTHREAFLHVLLSTEGNASKPAIVFCNHTKTADLLERMLRRLSHRVTSLHSLLPQSERNANLARFRASAARILVATDVASRGLDIPTVSLVINYDVPRNPDDYVHRVGRTARAGRRGEAVTLVGQRDVQLVLAIEERVGRQMEEWSEEGVSIEGRLVRTGALKEVGEAKREAMVEIDEGRDVLGRKRNKLKKVR.

Residues 1–77 form a disordered region; sequence MTSPVPSEPV…DAKPAAPAGQ (77 aa). Residues 17-31 are compositionally biased toward polar residues; the sequence is SSSGSEVEPSKTSTR. The short motif at 96 to 124 is the Q motif element; it reads SSFAALNVAPWLVGSLTTMAVRKPTAIQK. The Helicase ATP-binding domain occupies 127–306; it reads IPEILKGRDC…NMPRSANKPP (180 aa). 140–147 is a binding site for ATP; it reads SRTGSGKT. Residues 249-252 carry the DEAD box motif; sequence DEAD. One can recognise a Helicase C-terminal domain in the interval 338 to 485; sequence AFLHVLLSTE…EWSEEGVSIE (148 aa).

The protein belongs to the DEAD box helicase family. DDX49/DBP8 subfamily.

The protein resides in the nucleus. The protein localises to the nucleolus. The catalysed reaction is ATP + H2O = ADP + phosphate + H(+). ATP-binding RNA helicase involved in 40S ribosomal subunit biogenesis and is required for the normal formation of 18S rRNAs through pre-rRNA processing at A0, A1 and A2 sites. Required for vegetative growth. In Aspergillus fumigatus (strain ATCC MYA-4609 / CBS 101355 / FGSC A1100 / Af293) (Neosartorya fumigata), this protein is ATP-dependent RNA helicase dbp8 (dbp8).